Consider the following 279-residue polypeptide: Diaminopimelate epimerase (279 aa).

2 residues coordinate substrate: Asn13 and Asn66. Cys75 functions as the Proton donor in the catalytic mechanism. Substrate is bound by residues 76 to 77, Asn162, Asn195, and 213 to 214; these read GN and ER. The Proton acceptor role is filled by Cys222. Residue 223–224 coordinates substrate; sequence GT.

This sequence belongs to the diaminopimelate epimerase family. As to quaternary structure, homodimer.

The protein localises to the cytoplasm. It carries out the reaction (2S,6S)-2,6-diaminopimelate = meso-2,6-diaminopimelate. Its pathway is amino-acid biosynthesis; L-lysine biosynthesis via DAP pathway; DL-2,6-diaminopimelate from LL-2,6-diaminopimelate: step 1/1. In terms of biological role, catalyzes the stereoinversion of LL-2,6-diaminopimelate (L,L-DAP) to meso-diaminopimelate (meso-DAP), a precursor of L-lysine and an essential component of the bacterial peptidoglycan. In Synechocystis sp. (strain ATCC 27184 / PCC 6803 / Kazusa), this protein is Diaminopimelate epimerase.